Consider the following 113-residue polypeptide: Large ribosomal subunit protein uL22 (113 aa).

It belongs to the universal ribosomal protein uL22 family. Part of the 50S ribosomal subunit.

This protein binds specifically to 23S rRNA; its binding is stimulated by other ribosomal proteins, e.g. L4, L17, and L20. It is important during the early stages of 50S assembly. It makes multiple contacts with different domains of the 23S rRNA in the assembled 50S subunit and ribosome. Functionally, the globular domain of the protein is located near the polypeptide exit tunnel on the outside of the subunit, while an extended beta-hairpin is found that lines the wall of the exit tunnel in the center of the 70S ribosome. The chain is Large ribosomal subunit protein uL22 from Opitutus terrae (strain DSM 11246 / JCM 15787 / PB90-1).